Here is a 154-residue protein sequence, read N- to C-terminus: Large ribosomal subunit protein uL15 (154 aa).

The tract at residues 1-57 is disordered; that stretch reads MRFQDLHPQAGSRRRKRRIGRGIAAGQGASGGFGMRGQKSRSGRPTRPGFEGGQNPL. Residues 23–35 show a composition bias toward gly residues; that stretch reads IAAGQGASGGFGM.

It belongs to the universal ribosomal protein uL15 family. Part of the 50S ribosomal subunit.

Its function is as follows. Binds to the 23S rRNA. This Thermosynechococcus vestitus (strain NIES-2133 / IAM M-273 / BP-1) protein is Large ribosomal subunit protein uL15.